Reading from the N-terminus, the 295-residue chain is Carbapenem-hydrolyzing beta-lactamase transcriptional activator (295 aa).

The HTH lysR-type domain occupies 5–62; the sequence is LPLNALRAFEASARYLNFTKAGLELHVSQAAVSQQVRTLEQMLGVALFTRVPRGLQLT. Positions 22–41 form a DNA-binding region, H-T-H motif; sequence FTKAGLELHVSQAAVSQQVR.

Belongs to the LysR transcriptional regulatory family.

This protein is a positive regulator of gene expression of carbapenem-hydrolyzing beta-lactamase (NmcA). This chain is Carbapenem-hydrolyzing beta-lactamase transcriptional activator (nmcR), found in Enterobacter cloacae.